We begin with the raw amino-acid sequence, 178 residues long: Large ribosomal subunit protein uL6 (178 aa).

The protein belongs to the universal ribosomal protein uL6 family. As to quaternary structure, part of the 50S ribosomal subunit.

Functionally, this protein binds to the 23S rRNA, and is important in its secondary structure. It is located near the subunit interface in the base of the L7/L12 stalk, and near the tRNA binding site of the peptidyltransferase center. The polypeptide is Large ribosomal subunit protein uL6 (Lactococcus lactis subsp. cremoris (strain MG1363)).